Here is a 495-residue protein sequence, read N- to C-terminus: ATP synthase subunit beta, chloroplastic (495 aa).

172–179 (GGAGVGKT) contributes to the ATP binding site.

The protein belongs to the ATPase alpha/beta chains family. As to quaternary structure, F-type ATPases have 2 components, CF(1) - the catalytic core - and CF(0) - the membrane proton channel. CF(1) has five subunits: alpha(3), beta(3), gamma(1), delta(1), epsilon(1). CF(0) has four main subunits: a(1), b(1), b'(1) and c(9-12).

Its subcellular location is the plastid. It is found in the chloroplast thylakoid membrane. It carries out the reaction ATP + H2O + 4 H(+)(in) = ADP + phosphate + 5 H(+)(out). Produces ATP from ADP in the presence of a proton gradient across the membrane. The catalytic sites are hosted primarily by the beta subunits. The sequence is that of ATP synthase subunit beta, chloroplastic from Beaucarnea recurvata (Elephant-foot tree).